The primary structure comprises 302 residues: 4-diphosphocytidyl-2-C-methyl-D-erythritol kinase (302 aa).

Residue K32 is part of the active site. 115-125 (PMGGGVGGGSS) serves as a coordination point for ATP. D157 is an active-site residue.

Belongs to the GHMP kinase family. IspE subfamily.

The catalysed reaction is 4-CDP-2-C-methyl-D-erythritol + ATP = 4-CDP-2-C-methyl-D-erythritol 2-phosphate + ADP + H(+). It participates in isoprenoid biosynthesis; isopentenyl diphosphate biosynthesis via DXP pathway; isopentenyl diphosphate from 1-deoxy-D-xylulose 5-phosphate: step 3/6. Functionally, catalyzes the phosphorylation of the position 2 hydroxy group of 4-diphosphocytidyl-2C-methyl-D-erythritol. This is 4-diphosphocytidyl-2-C-methyl-D-erythritol kinase from Actinobacillus succinogenes (strain ATCC 55618 / DSM 22257 / CCUG 43843 / 130Z).